The following is a 498-amino-acid chain: ADP,ATP carrier protein 1 (498 aa).

The Cytoplasmic segment spans residues 1–33 (MNNPKNDNYLSELSKVIWPIERYENKKFLPMAF). Residues 34 to 54 (MMFCILLNYSTLRSIKDGFVV) traverse the membrane as a helical segment. The cysteines at positions 37 and 85 are disulfide-linked. The Extracellular portion of the chain corresponds to 55 to 67 (TDIGAEAISFLKT). A helical membrane pass occupies residues 68 to 88 (YIVLPSAVIAMVIYVKLCDIL). The Cytoplasmic segment spans residues 89–92 (KQEN). A helical transmembrane segment spans residues 93-113 (VFYVITSFFLGYFALFAFVLY). The Extracellular portion of the chain corresponds to 114-147 (PYPDLVHPDPETIESWSVAYPNVKWFIRIVGKWS). Residues 148 to 168 (FASFYTMAELWGTMMLSLLFW) traverse the membrane as a helical segment. The Cytoplasmic portion of the chain corresponds to 169-184 (QFANQITKTDEAKRFY). The chain crosses the membrane as a helical span at residues 185–205 (SMFGLLANLALPVTSVIIGYC). Topologically, residues 206–218 (LHEKTQIVAEHLK) are extracellular. The helical transmembrane segment at 219 to 239 (FVPLFVIMITSSFLVILTYRW) threads the bilayer. Residues 240–279 (MNKNVLTDPRLYDPALVKEKKAKAKMSLIDSFKMIFTSKY) are Cytoplasmic-facing. Residues 280 to 300 (VGYIALLLIAYGVSVNLVEGV) form a helical membrane-spanning segment. The Extracellular segment spans residues 301-320 (WKSKVKELYPTKEAYTIYMG). A helical membrane pass occupies residues 321–341 (KFQFYQGWVAIAFMLIGSNIL). At 342–348 (RKVSWLT) the chain is on the cytoplasmic side. A helical transmembrane segment spans residues 349–369 (AAMITPLMMLITGAAFFAFIF). The Extracellular segment spans residues 370–379 (FDSVIAMHLT). A helical membrane pass occupies residues 380–400 (GILASGPLALAVMIGMIQNVL). At 401–438 (SKGVKYSLFDATKNMAYIPLDKDLRVKGQAAVEVIGGR) the chain is on the cytoplasmic side. 436–442 (GGRFGKS) serves as a coordination point for ATP. Residues 439-459 (FGKSGGAIIQSTFFILFPAFG) form a helical membrane-spanning segment. Residues 460–465 (FVEATP) lie on the Extracellular side of the membrane. The helical transmembrane segment at 466 to 486 (YFASIFFVIVILWIYAVKGLN) threads the bilayer. The Cytoplasmic segment spans residues 487 to 498 (KEYKVLVNKTEK).

The protein belongs to the ADP/ATP translocase tlc family.

Its subcellular location is the cell membrane. Functionally, provides the rickettsial cell with host ATP in exchange for rickettsial ADP. This is an obligate exchange system. This energy acquiring activity is an important component of rickettsial parasitism. The sequence is that of ADP,ATP carrier protein 1 (tlcA) from Rickettsia conorii (strain ATCC VR-613 / Malish 7).